The following is a 987-amino-acid chain: Mediator of RNA polymerase II transcription subunit 24 (987 aa).

6 consecutive short sequence motifs (LXXLL motif) follow at residues L128–L132, L344–L348, L446–L450, L555–L559, L786–L790, and L855–L859. Phosphoserine is present on residues S860 and S871.

It belongs to the Mediator complex subunit 24 family. Component of the Mediator complex, which is composed of MED1, MED4, MED6, MED7, MED8, MED9, MED10, MED11, MED12, MED13, MED13L, MED14, MED15, MED16, MED17, MED18, MED19, MED20, MED21, MED22, MED23, MED24, MED25, MED26, MED27, MED29, MED30, MED31, CCNC, CDK8 and CDC2L6/CDK11. The MED12, MED13, CCNC and CDK8 subunits form a distinct module termed the CDK8 module. Mediator containing the CDK8 module is less active than Mediator lacking this module in supporting transcriptional activation. Individual preparations of the Mediator complex lacking one or more distinct subunits have been variously termed ARC, CRSP, DRIP, PC2, SMCC and TRAP. Interacts with AR.

Its subcellular location is the nucleus. Functionally, component of the Mediator complex, a coactivator involved in the regulated transcription of nearly all RNA polymerase II-dependent genes. Mediator functions as a bridge to convey information from gene-specific regulatory proteins to the basal RNA polymerase II transcription machinery. Mediator is recruited to promoters by direct interactions with regulatory proteins and serves as a scaffold for the assembly of a functional preinitiation complex with RNA polymerase II and the general transcription factors. The chain is Mediator of RNA polymerase II transcription subunit 24 (Med24) from Rattus norvegicus (Rat).